The following is a 572-amino-acid chain: Methionine--tRNA ligase (572 aa).

The 'HIGH' region motif lies at 11–21 (PYINGVKHLGN). Cys-143, Cys-146, Cys-156, and Cys-159 together coordinate Zn(2+). A 'KMSKS' region motif is present at residues 341–345 (KFSTS). ATP is bound at residue Thr-344.

It belongs to the class-I aminoacyl-tRNA synthetase family. MetG type 1 subfamily. Monomer. It depends on Zn(2+) as a cofactor.

Its subcellular location is the cytoplasm. The catalysed reaction is tRNA(Met) + L-methionine + ATP = L-methionyl-tRNA(Met) + AMP + diphosphate. In terms of biological role, is required not only for elongation of protein synthesis but also for the initiation of all mRNA translation through initiator tRNA(fMet) aminoacylation. This chain is Methionine--tRNA ligase, found in Maricaulis maris (strain MCS10) (Caulobacter maris).